The sequence spans 174 residues: Disulfide bond formation protein B (174 aa).

Residues 1–14 (MLNFLNICSKTRKS) are Cytoplasmic-facing. The helical transmembrane segment at 15-31 (WVLLIFTVVILELIALY) threads the bilayer. Over 32–49 (LQHIVLIKPCVLCVYQRC) the chain is Periplasmic. The cysteines at positions 41 and 44 are disulfide-linked. The helical transmembrane segment at 50–65 (ALCGIGIAGLIGTIAP) threads the bilayer. The Cytoplasmic segment spans residues 66–71 (FTPLRF). The chain crosses the membrane as a helical span at residues 72 to 89 (FSIPIWIYSAWKGLLLAK). Residues 90–144 (EYTDIQLHPSPFFMCDLFVQFPHWLPLNKWWPSMFDADGDCAEYKWYFLSLEISQ) are Periplasmic-facing. The cysteines at positions 104 and 130 are disulfide-linked. The helical transmembrane segment at 145 to 163 (WMLIIFANYLIIAILVSLS) threads the bilayer. Residues 164-174 (QIIDLKKWNNK) lie on the Cytoplasmic side of the membrane.

Belongs to the DsbB family.

Its subcellular location is the cell inner membrane. Its function is as follows. Required for disulfide bond formation in some periplasmic proteins. Acts by oxidizing the DsbA protein. This Blochmanniella pennsylvanica (strain BPEN) protein is Disulfide bond formation protein B.